We begin with the raw amino-acid sequence, 123 residues long: Small ribosomal subunit protein uS12 (123 aa).

Asp-89 carries the post-translational modification 3-methylthioaspartic acid.

This sequence belongs to the universal ribosomal protein uS12 family. Part of the 30S ribosomal subunit. Contacts proteins S8 and S17. May interact with IF1 in the 30S initiation complex.

Its function is as follows. With S4 and S5 plays an important role in translational accuracy. In terms of biological role, interacts with and stabilizes bases of the 16S rRNA that are involved in tRNA selection in the A site and with the mRNA backbone. Located at the interface of the 30S and 50S subunits, it traverses the body of the 30S subunit contacting proteins on the other side and probably holding the rRNA structure together. The combined cluster of proteins S8, S12 and S17 appears to hold together the shoulder and platform of the 30S subunit. The sequence is that of Small ribosomal subunit protein uS12 from Geobacter metallireducens (strain ATCC 53774 / DSM 7210 / GS-15).